A 208-amino-acid chain; its full sequence is MKPLTARQQEVFDLIKAKIDDTGMPPTRAEIARELGFRSANAAEEHLKALARKQVIEIIPGASRGIRILLQDADDHDEELGVPLIGQVAAGEPILAQEHVESHYKVDPGMFKPQADFLLRVNGESMKDIGIMDGDLLAVHKTQDVRDGQVVVARVDDDVTVKRLERKGSMVFLHAENEEFSPIEVDLTSQSLSIEGLAVGVIRSTTWM.

The segment at residues 28–48 (RAEIARELGFRSANAAEEHLK) is a DNA-binding region (H-T-H motif). Active-site for autocatalytic cleavage activity residues include serine 125 and lysine 162.

It belongs to the peptidase S24 family. As to quaternary structure, homodimer.

The catalysed reaction is Hydrolysis of Ala-|-Gly bond in repressor LexA.. In terms of biological role, represses a number of genes involved in the response to DNA damage (SOS response), including recA and lexA. In the presence of single-stranded DNA, RecA interacts with LexA causing an autocatalytic cleavage which disrupts the DNA-binding part of LexA, leading to derepression of the SOS regulon and eventually DNA repair. The protein is LexA repressor of Aliivibrio fischeri (strain MJ11) (Vibrio fischeri).